Consider the following 149-residue polypeptide: MSIADNKKAFHDYFIEERFEAGLVLEGWEVKAIRAGRVQLKEAYVVVKNGAVYLIGCHISPLPTASTHIHPDPTRSRKLLLHAAEINKLIGKTERAGFTLVPLDMHYSKGRIKLEIGLAKGKKQHDKRAAEKDREWQREKQRLVRSAQH.

The disordered stretch occupies residues 121–149 (GKKQHDKRAAEKDREWQREKQRLVRSAQH). Residues 127–142 (KRAAEKDREWQREKQR) are compositionally biased toward basic and acidic residues.

The protein belongs to the SmpB family.

It is found in the cytoplasm. Functionally, required for rescue of stalled ribosomes mediated by trans-translation. Binds to transfer-messenger RNA (tmRNA), required for stable association of tmRNA with ribosomes. tmRNA and SmpB together mimic tRNA shape, replacing the anticodon stem-loop with SmpB. tmRNA is encoded by the ssrA gene; the 2 termini fold to resemble tRNA(Ala) and it encodes a 'tag peptide', a short internal open reading frame. During trans-translation Ala-aminoacylated tmRNA acts like a tRNA, entering the A-site of stalled ribosomes, displacing the stalled mRNA. The ribosome then switches to translate the ORF on the tmRNA; the nascent peptide is terminated with the 'tag peptide' encoded by the tmRNA and targeted for degradation. The ribosome is freed to recommence translation, which seems to be the essential function of trans-translation. The chain is SsrA-binding protein from Thiobacillus denitrificans (strain ATCC 25259 / T1).